Reading from the N-terminus, the 557-residue chain is MAEEQNPSATFDTILTLDFGSQYTHLITRRLREIGVYSEMLPCTQKLADLPFKPKGIILSGGPYSVYEDGAPHADPAVFELGVPVLGICYGLQEIAYRLGKDNVVAGTAREYGHADLNAQRLDNQGHVDKLFAGLEEHVKVWMSHGDKLVKLPEGFHTIATTANSEYAGIAHETKPVYGIQFHPEVTHTPDGAKLLRNFAVDICGANPNWTMSKFVDQEILRIRKLVGETDHVLGAVSGGVDSTVAAKLMKEAIGDRFHAVLVNNGCMRLNECETVAETLNKHLGINLTVVDASKRFLDGLKGVTDPEKKRMFIGATFIDVFEEEAEKIEALAENSGAKVKWFLQGTLYPDVIESISFKGPSATIKTHHNVGALPKRMIEGQGMKLIEPLRELFKDEVRQLGRELGIAHELVMRHPFPGPGIAIRVLGEVTPERVDIARKADHIFISMIREAGLYDKISQAYAALDPSKAVGVMGDKRVYAEIIILRAVETTDCKLTLGIDGDFVLRYIISVMTARAFPFDNEFLSKCATRIINEVHGVSRVLYDISSKPPATIEME.

The Glutamine amidotransferase type-1 domain maps to 13–209 (TILTLDFGSQ…AVDICGANPN (197 aa)). C89 serves as the catalytic Nucleophile. Catalysis depends on residues H183 and E185. Positions 210 to 414 (WTMSKFVDQE…LGIAHELVMR (205 aa)) constitute a GMPS ATP-PPase domain. An ATP-binding site is contributed by 238–244 (SGGVDST). Residues R311, D476, K549, and E555 each coordinate XMP.

Homodimer. The cofactor is Mg(2+).

Its subcellular location is the cytoplasm. It is found in the cytosol. It carries out the reaction XMP + L-glutamine + ATP + H2O = GMP + L-glutamate + AMP + diphosphate + 2 H(+). Its pathway is purine metabolism; GMP biosynthesis; GMP from XMP (L-Gln route): step 1/1. Its activity is regulated as follows. Inhibited by 6-diazo-5-oxo-l-norleucine (DON) and acivicin (ACI). Functionally, catalyzes the conversion of xanthine monophosphate (XMP) to GMP in the presence of glutamine and ATP through an adenyl-XMP intermediate. The chain is GMP synthase [glutamine-hydrolyzing] (gua1) from Aspergillus fumigatus (strain ATCC MYA-4609 / CBS 101355 / FGSC A1100 / Af293) (Neosartorya fumigata).